Here is a 49-residue protein sequence, read N- to C-terminus: Delta-actitoxin-Axm1a (49 aa).

3 cysteine pairs are disulfide-bonded: cysteine 4–cysteine 46, cysteine 6–cysteine 36, and cysteine 29–cysteine 47.

Belongs to the sea anemone sodium channel inhibitory toxin family. Type I subfamily.

It is found in the secreted. Its subcellular location is the nematocyst. In terms of biological role, binds specifically to voltage-gated sodium channels (Nav) (site 3), thereby delaying their inactivation. This toxin retains the greatest capacity to discriminate between the cardiac (Nav1.5/SCN5A) and neuronal sodium channels (2.5 nM versus 120 nM, when electrophysiologically tested and 14 nM versus 400 nM, when tested by ion flux), whereas its paralog Anthopleurin-B has the highest affinity of all anemone toxins for the mammalian sodium channel. Its ability to differentiate between cardiac and skeletal channels appears to be associated with domain 4 of the channel. This toxin does not slow or inhibit closed-state inactivation of cardiac sodium channels, but selectively modifies inactivation from the open-state. It does not display phospholipid-binding activities, suggesting that the domain IV S3-S4 linker is located at the extracellular surface and not buried in the phospholipid bilayer. The polypeptide is Delta-actitoxin-Axm1a (Anthopleura xanthogrammica (Giant green sea anemone)).